Consider the following 162-residue polypeptide: uncharacterized protein (162 aa).

3 Pentapeptide repeat domains span residues 33 to 72 (ASLIGAQLIFVDLGGANLTRAQLDSATLKNANLALANMTE), 73 to 112 (VCLIYADLSNADLSGANLVGADLTNADLSGAKLGGADLRK), and 113 to 152 (ANLSEASLRGADLRGVNLIEANLTNTDFSEADLTGAYISD).

This is an uncharacterized protein from Synechocystis sp. (strain ATCC 27184 / PCC 6803 / Kazusa).